Consider the following 142-residue polypeptide: Small heat shock protein IbpB (142 aa).

The region spanning 26-137 is the sHSP domain; that stretch reads TGESQSFPPY…APQRIAISER (112 aa).

The protein belongs to the small heat shock protein (HSP20) family. Homodimer. Forms homomultimers of about 100-150 subunits at optimal growth temperatures. Conformation changes to oligomers at high temperatures or high ionic concentrations. The decrease in size of the multimers is accompanied by an increase in chaperone activity.

It is found in the cytoplasm. Functionally, associates with aggregated proteins, together with IbpA, to stabilize and protect them from irreversible denaturation and extensive proteolysis during heat shock and oxidative stress. Aggregated proteins bound to the IbpAB complex are more efficiently refolded and reactivated by the ATP-dependent chaperone systems ClpB and DnaK/DnaJ/GrpE. Its activity is ATP-independent. This is Small heat shock protein IbpB from Citrobacter koseri (strain ATCC BAA-895 / CDC 4225-83 / SGSC4696).